The primary structure comprises 86 residues: Small ribosomal subunit protein bS16c (86 aa).

It belongs to the bacterial ribosomal protein bS16 family.

The protein resides in the plastid. Its subcellular location is the chloroplast. The protein is Small ribosomal subunit protein bS16c of Liriodendron tulipifera (Tuliptree).